A 166-amino-acid chain; its full sequence is Glycine cleavage system H protein 3, mitochondrial (166 aa).

Residues 1–35 (MALRMWASSTANALKLSSSASKSHLLPAFSISRCF) constitute a mitochondrion transit peptide. The Lipoyl-binding domain maps to 57–139 (VATIGITDHA…YEDGWMIKVK (83 aa)). Lys-98 carries the N6-lipoyllysine modification. A Phosphoserine modification is found at Ser-141.

It belongs to the GcvH family. The glycine cleavage system is composed of four proteins: P, T, L and H. The cofactor is (R)-lipoate. In terms of processing, S-nitrosylated and/or glutathionylated at unknown positions in response to nitric oxide.

Its subcellular location is the mitochondrion. Inhibited by harpin, S-nitrosoglutathione (GSNO), nitric oxide, N-ethylmaleimide and 5,5'-dithiobis-(2-nitrobenzoic acid). Its function is as follows. The glycine decarboxylase (GDC) or glycine cleavage system catalyzes the degradation of glycine. The H protein shuttles the methylamine group of glycine from the P protein to the T protein. In Arabidopsis thaliana (Mouse-ear cress), this protein is Glycine cleavage system H protein 3, mitochondrial (GDH3).